Reading from the N-terminus, the 238-residue chain is Hydatid disease diagnostic antigen P-29 (238 aa).

The region spanning 18–238 is the BAR domain; the sequence is GELVNKNEKT…AKECSMMLGE (221 aa).

The protein is Hydatid disease diagnostic antigen P-29 of Echinococcus granulosus (Hydatid tapeworm).